Reading from the N-terminus, the 100-residue chain is Vesicle-associated membrane protein 3 (100 aa).

At Ser-2 the chain carries N-acetylserine. Residues 2–77 lie on the Cytoplasmic side of the membrane; it reads STGPTAATGS…KRKYWWKNCK (76 aa). The 61-residue stretch at 14-74 folds into the v-SNARE coiled-coil homology domain; it reads RLQQTQNQVD…AKLKRKYWWK (61 aa). Glycyl lysine isopeptide (Lys-Gly) (interchain with G-Cter in ubiquitin) cross-links involve residues Lys-66, Lys-68, and Lys-77. A helical; Anchor for type IV membrane protein membrane pass occupies residues 78 to 98; it reads MWAIGITVLVIFIIIIIVWVV. The Vesicular portion of the chain corresponds to 99–100; the sequence is SS.

Belongs to the synaptobrevin family. Interacts with POPDC1 (via the C-terminus cytoplasmic tail). Interacts with BCAP31; involved in VAMP3 export from the endoplasmic reticulum. Interacts with BAIAP3; this interaction is increased in the presence of calcium. Interacts with PICALM. Post-translationally, ubiquitinated by RNF167 at Lys-66, Lys-68 and Lys-77, regulating the recycling endosome pathway. In terms of processing, (Microbial infection) Targeted and hydrolyzed by C.botulinum neurotoxin type B (BoNT/B, botB) which hydrolyzes the 59-Gln-|-Phe-60 bond and probably inhibits neurotransmitter release. (Microbial infection) Targeted and hydrolyzed by C.botulinum neurotoxin type D (BoNT/D, botD) which hydrolyzes the 42-Lys-|-Leu-43 bond and probably inhibits neurotransmitter release. Note that humans are not known to be infected by C.botulinum type D. Post-translationally, (Microbial infection) Targeted and hydrolyzed by C.botulinum neurotoxin type F (BoNT/F, botF) which hydrolyzes the 41-Gln-|-Lys-42 bond and probably inhibits neurotransmitter release.

Its subcellular location is the early endosome membrane. It localises to the recycling endosome membrane. The protein localises to the synapse. The protein resides in the synaptosome. SNARE involved in vesicular transport from the late endosomes to the trans-Golgi network. This is Vesicle-associated membrane protein 3 (VAMP3) from Homo sapiens (Human).